A 1477-amino-acid polypeptide reads, in one-letter code: MMRNVQSFYFLFLLIVLNFHVVLSAVCIGQRATTTIWLNQNGDCQDVGFCQYLQNCTCWHGNLVVKSTKYYDEENFKPYFPKLREITGYLLISLCTLKFFHLFPGLTVIRGGDLILNYALVIYYNEIKEVYFPSLTAILNGGVHIGRNHRLCYVNTIRWKSIIKDIHQTGQYGIYLESNKLNCDLGCLKGHCHPAPGHDGDPKAQYCWGPGPKKQQNKAQCQRFCNTQCGPEGCLDGSDHICCHHECLGGCSAINSTNTCHACRKYRIKSTGQCVSKCPRKQYLVDKFLCQESCPYWSINSTEYHHYLWQGECVTKCPVNYISNNQTKKCEKCKSGMKCNTVCKYQDVMADGTLYNGALIRVPSDISKKGLVGCSVFEGSLTFQLQEGTGKAEDSLNELKSLKVLKGHLKIQKSSLKSLNFLSSLEVIETPQNALLHNKYVMAVYENSQLSELWPGNESIIVSDGGIFFQYNPRLCPLHIRNLQDRIHYKNGSKVTGEVSLQNNGHKVLCDTQMLVMHVEEFIPPDLNMETDMTAIECNSFKCVKVTWNFTMTSAYNNILFYAIYFKELQSNQEAVVQLDNECQNNDDWNVITVDIPKIESLEQSLFLQSKIISKLTPYTRYAFYIKEIVSKGEERSSHIHYINISQDLPSEPLGVEASFLSENKILLKWRAPSKPNGIITAFKIYYNKPDYSFWEEQKVLDWCSRDASRDKNAKDVAGYPVNKENYNQYCNISCVCDEEKENSKAIKADREAHNFNVEFQTELMRVLFTKNKFSYRNKNKSPPKIDFSKNISLILSNKILTSTSTTVTQAKIEIIEEPKVTVNGNIFSYVISGLDYFEDYELKVCGCTVVGCRRPSSTINLDCGIVQARTGVNLTADNLDSKMVRVQVQLDSYNISWIAPHKPNAVILKYEISIRYALDKDALVICRPGYLPTYIIRKSRFGNYVAKIRAISPAGNGSWTEEIHFKVAELSVTKNNNQLIIGIISAVSAVIVALLVFILLYMFLHRKLEKDVQGVLYASVNPEYMNSKEVYIPDEWELNREKIELIRELGQGSFGMVFEGIAHGIGDHAELRVAVKTTNENASIHDRIQILQEASIMKAFNCNHVVKLIGVVSQGQPTFVVMELMGRGDLKSYLKERRPDDGGIPLMRQEIYQMVAEIADGMAYLAARKFVHCDLAARNCMVASDFTVKIGDFGMARDIYERNYYRKDGKSLLPIRWMAPESLKDGIFSTASDVWSFGVVLWEICTLASQPYQGKTNEQVLNFVLSNGHLDYPEGCDYQLREFMSLCWHRDPKMRPSFLEIVHVLENEVDDDFVMVSFYHEMKRKALEDIYMKSESYIKSDAYTMSDGYTKGDGNMQNMLSRSQNRKSAIEKSKERLSISSLDSGTYVEKYDANDTPEEIPKKKKRPRSKRNSAVDSNACETKPMLRVESLYDNHDAFSENMQYGDTPVGKSDLMHPETNRELRLSEIFYGKPIPV.

An N-terminal signal peptide occupies residues 1-24 (MMRNVQSFYFLFLLIVLNFHVVLS). The Extracellular segment spans residues 25–980 (AVCIGQRATT…LSVTKNNNQL (956 aa)). 13 N-linked (GlcNAc...) asparagine glycosylation sites follow: N55, N255, N300, N325, N457, N491, N549, N644, N732, N791, N874, N895, and N957. Fibronectin type-III domains follow at residues 652 to 750 (EPLG…IKAD) and 780 to 869 (NKSP…IVQA). In terms of domain architecture, Fibronectin type-III 3 spans 880-971 (LDSKMVRVQV…EEIHFKVAEL (92 aa)). Residues 981–1001 (IIGIISAVSAVIVALLVFILL) traverse the membrane as a helical segment. Over 1002–1477 (YMFLHRKLEK…EIFYGKPIPV (476 aa)) the chain is Cytoplasmic. The 272-residue stretch at 1044–1315 (IELIRELGQG…LENEVDDDFV (272 aa)) folds into the Protein kinase domain. Residues 1050 to 1058 (LGQGSFGMV) and K1077 contribute to the ATP site. The Proton acceptor role is filled by D1175. At Y1201 the chain carries Phosphotyrosine; by autocatalysis. Disordered stretches follow at residues 1350 to 1376 (YTKG…KSKE) and 1391 to 1421 (KYDA…SNAC). The span at 1356–1368 (NMQNMLSRSQNRK) shows a compositional bias: polar residues. Positions 1403–1412 (KKKKRPRSKR) are enriched in basic residues.

This sequence belongs to the protein kinase superfamily. Tyr protein kinase family. Insulin receptor subfamily. Requires Mn(2+) as cofactor. In terms of tissue distribution, expressed in dividing epithelial cells.

It localises to the membrane. The enzyme catalyses L-tyrosyl-[protein] + ATP = O-phospho-L-tyrosyl-[protein] + ADP + H(+). Functionally, this receptor probably binds an insulin related protein and has a tyrosine-protein kinase activity. The protein is Putative insulin-like peptide receptor (HTK7) of Hydra vulgaris (Hydra).